The sequence spans 388 residues: 4-hydroxy-3-methylbut-2-en-1-yl diphosphate synthase (flavodoxin) (388 aa).

4 residues coordinate [4Fe-4S] cluster: cysteine 281, cysteine 284, cysteine 316, and glutamate 323.

This sequence belongs to the IspG family. It depends on [4Fe-4S] cluster as a cofactor.

It carries out the reaction (2E)-4-hydroxy-3-methylbut-2-enyl diphosphate + oxidized [flavodoxin] + H2O + 2 H(+) = 2-C-methyl-D-erythritol 2,4-cyclic diphosphate + reduced [flavodoxin]. Its pathway is isoprenoid biosynthesis; isopentenyl diphosphate biosynthesis via DXP pathway; isopentenyl diphosphate from 1-deoxy-D-xylulose 5-phosphate: step 5/6. In terms of biological role, converts 2C-methyl-D-erythritol 2,4-cyclodiphosphate (ME-2,4cPP) into 1-hydroxy-2-methyl-2-(E)-butenyl 4-diphosphate. This Arthrobacter sp. (strain FB24) protein is 4-hydroxy-3-methylbut-2-en-1-yl diphosphate synthase (flavodoxin).